The following is a 344-amino-acid chain: L-rhamnose-proton symporter (344 aa).

The next 10 membrane-spanning stretches (helical) occupy residues 4 to 24 (AITMGIFWHLIGAASAACFYA), 38 to 58 (WSVGGIVSWLILPWTISALLL), 68 to 88 (FNLSTLLPVFLFGAMWGIGNI), 101 to 121 (MGIGIAIGITLIVGTLMTPII), 137 to 157 (TLLGVFVALIGVGIVTRAGQL), 175 to 195 (LLLAVICGIFSAGMSFAMNAA), 214 to 234 (LPSYVVIMGGGALVNLGFCFI), 259 to 279 (ILLSALGGLMWYLQFFFYAWG), 290 to 310 (MSWMLHMSFYVLCGGLVGLVL), and 321 to 341 (VAVLSLGCVVIIIAANIVGLG).

Belongs to the L-rhamnose transporter (TC 2.A.7.6) family.

Its subcellular location is the cell inner membrane. It catalyses the reaction L-rhamnopyranose(in) + H(+)(in) = L-rhamnopyranose(out) + H(+)(out). Its function is as follows. Uptake of L-rhamnose across the cytoplasmic membrane with the concomitant transport of protons into the cell (symport system). This Salmonella paratyphi A (strain ATCC 9150 / SARB42) protein is L-rhamnose-proton symporter.